A 260-amino-acid polypeptide reads, in one-letter code: Ribonuclease PH (260 aa).

Phosphate-binding positions include arginine 88 and 126 to 128 (GTR).

It belongs to the RNase PH family. In terms of assembly, homohexameric ring arranged as a trimer of dimers.

The catalysed reaction is tRNA(n+1) + phosphate = tRNA(n) + a ribonucleoside 5'-diphosphate. Functionally, phosphorolytic 3'-5' exoribonuclease that plays an important role in tRNA 3'-end maturation. Removes nucleotide residues following the 3'-CCA terminus of tRNAs; can also add nucleotides to the ends of RNA molecules by using nucleoside diphosphates as substrates, but this may not be physiologically important. Probably plays a role in initiation of 16S rRNA degradation (leading to ribosome degradation) during starvation. The protein is Ribonuclease PH of Mycolicibacterium gilvum (strain PYR-GCK) (Mycobacterium gilvum (strain PYR-GCK)).